A 66-amino-acid polypeptide reads, in one-letter code: Small vasohibin-binding protein (66 aa).

Residues 1-23 show a composition bias toward basic and acidic residues; the sequence is MDPPARKEKSKVKEPAFRVEKAK. The interval 1 to 30 is disordered; the sequence is MDPPARKEKSKVKEPAFRVEKAKQKSAQQE. Positions 5–52 form a coiled coil; sequence ARKEKSKVKEPAFRVEKAKQKSAQQELKQRQRAEIYALNRVMTELEQQ.

The protein belongs to the SVBP family. In terms of assembly, interacts with VASH1 and VASH2. As to expression, highly expressed in bone marrow, spleen and testis.

The protein resides in the cytoplasm. It localises to the secreted. The protein localises to the cytoskeleton. Enhances the tyrosine carboxypeptidase activity of VASH1 and VASH2, thereby promoting the removal of the C-terminal tyrosine residue of alpha-tubulin. Also required to enhance the solubility and secretion of VASH1 and VASH2. Plays a role in axon and excitatory synapse formation. The polypeptide is Small vasohibin-binding protein (Mus musculus (Mouse)).